The primary structure comprises 431 residues: uncharacterized protein (431 aa).

11 helical membrane-spanning segments follow: residues 33-53, 63-83, 111-131, 143-163, 197-217, 241-261, 273-293, 318-338, 358-378, 383-403, and 407-427; these read VARV…VIYL, FSVF…ANGL, VSGM…PLWS, VALL…LGML, LVGF…MLMT, AHSI…PVLL, GVVI…LTAM, LIGG…PWIM, AAAV…AAAL, SLGW…PLSL, and TVVA…VALA.

It to M.tuberculosis Rv1510 and Rv3630.

The protein localises to the cell membrane. This is an uncharacterized protein from Mycobacterium bovis (strain ATCC BAA-935 / AF2122/97).